A 367-amino-acid polypeptide reads, in one-letter code: Undecaprenyl-phosphate alpha-N-acetylglucosaminyl 1-phosphate transferase (367 aa).

The next 9 helical transmembrane spans lie at Leu-3–Leu-23, Gly-45–Leu-65, Tyr-69–Met-89, Trp-129–Ile-149, Ile-158–Trp-178, Met-187–Leu-207, Val-213–Glu-233, Ile-242–Met-262, and Val-318–Ile-338.

Belongs to the glycosyltransferase 4 family. WecA subfamily. Mg(2+) serves as cofactor. It depends on Mn(2+) as a cofactor.

Its subcellular location is the cell inner membrane. It carries out the reaction di-trans,octa-cis-undecaprenyl phosphate + UDP-N-acetyl-alpha-D-glucosamine = N-acetyl-alpha-D-glucosaminyl-di-trans,octa-cis-undecaprenyl diphosphate + UMP. It participates in bacterial outer membrane biogenesis; LPS O-antigen biosynthesis. Its pathway is bacterial outer membrane biogenesis; enterobacterial common antigen biosynthesis. With respect to regulation, inhibited by tunicamycin. Catalyzes the transfer of the GlcNAc-1-phosphate moiety from UDP-GlcNAc onto the carrier lipid undecaprenyl phosphate (C55-P), yielding GlcNAc-pyrophosphoryl-undecaprenyl (GlcNAc-PP-C55). The polypeptide is Undecaprenyl-phosphate alpha-N-acetylglucosaminyl 1-phosphate transferase (Salmonella typhimurium (strain LT2 / SGSC1412 / ATCC 700720)).